A 150-amino-acid polypeptide reads, in one-letter code: MRGEANGEEEQQPPRRNHLRDDAEEEEEVERRAARPVSGQQQQQQRRRPTDVGGGAAMRSVGYVGKHRLSAAIARLDQELQSLQDELNELETMEPASAACQGVITSTEGKSDPLLPVTIGPENASWERWFQRVRSSRSNKWWASKGSDFS.

The span at 1-11 shows a compositional bias: acidic residues; the sequence is MRGEANGEEEQ. A disordered region spans residues 1–59; it reads MRGEANGEEEQQPPRRNHLRDDAEEEEEVERRAARPVSGQQQQQQRRRPTDVGGGAAMR. A coiled-coil region spans residues 65–97; it reads GKHRLSAAIARLDQELQSLQDELNELETMEPAS. The region spanning 71–137 is the G protein gamma domain; sequence AAIARLDQEL…RWFQRVRSSR (67 aa).

G proteins are composed of 3 units, alpha, beta and gamma. Interacts with the beta subunit RGB1.

Its subcellular location is the cell membrane. Guanine nucleotide-binding proteins (G proteins) are involved as modulators or transducers in various transmembrane signaling systems. The sequence is that of Guanine nucleotide-binding protein subunit gamma 2 from Oryza sativa subsp. indica (Rice).